We begin with the raw amino-acid sequence, 361 residues long: Chorismate synthase (361 aa).

NADP(+) is bound by residues R48 and R54. FMN-binding positions include 125–127, 238–239, G278, 293–297, and R319; these read RSS, NA, and KPTSS.

This sequence belongs to the chorismate synthase family. In terms of assembly, homotetramer. FMNH2 is required as a cofactor.

It catalyses the reaction 5-O-(1-carboxyvinyl)-3-phosphoshikimate = chorismate + phosphate. It participates in metabolic intermediate biosynthesis; chorismate biosynthesis; chorismate from D-erythrose 4-phosphate and phosphoenolpyruvate: step 7/7. Functionally, catalyzes the anti-1,4-elimination of the C-3 phosphate and the C-6 proR hydrogen from 5-enolpyruvylshikimate-3-phosphate (EPSP) to yield chorismate, which is the branch point compound that serves as the starting substrate for the three terminal pathways of aromatic amino acid biosynthesis. This reaction introduces a second double bond into the aromatic ring system. In Escherichia coli O7:K1 (strain IAI39 / ExPEC), this protein is Chorismate synthase.